Consider the following 402-residue polypeptide: 5-methylphenazine-1-carboxylate 1-monooxygenase (402 aa).

Residues 14-15 (IG), 35-36 (ES), 43-45 (LGV), R106, V132, R191, and D310 each bind FAD. Over residues 368 to 385 (REKEEWAAASRPKTEKSA) the composition is skewed to basic and acidic residues. Residues 368-402 (REKEEWAAASRPKTEKSAALEAITGSYRNQVERPR) are disordered.

As to quaternary structure, monomer in solution. Probably interacts transiently with PhzM. It depends on FAD as a cofactor.

The catalysed reaction is 5-methyl-phenazine-1-carboxylate + NADH + O2 + 2 H(+) = pyocyanin + CO2 + NAD(+) + H2O. It participates in secondary metabolite biosynthesis; pyocyanine biosynthesis. Its function is as follows. Involved in the biosynthesis of pyocyanine, a blue-pigmented phenazine derivative, which plays a role in virulence. Catalyzes the oxidative decarboxylation of 5-methylphenazine-1-carboxylate (5-methyl-PCA) to pyocyanine. Can also act on phenazine-1-carboxylate (PCA), converting it into 1-hydroxyphenazine (1-HP). However, PCA is a poor substrate. The chain is 5-methylphenazine-1-carboxylate 1-monooxygenase from Pseudomonas aeruginosa (strain ATCC 15692 / DSM 22644 / CIP 104116 / JCM 14847 / LMG 12228 / 1C / PRS 101 / PAO1).